Reading from the N-terminus, the 296-residue chain is tRNA dimethylallyltransferase (296 aa).

2–9 lines the ATP pocket; the sequence is GPTASGKT. Residue 4–9 participates in substrate binding; that stretch reads TASGKT. Interaction with substrate tRNA regions lie at residues 27 to 30, 151 to 155, and 232 to 237; these read DSAL, QRLSR, and RCVGYR.

It belongs to the IPP transferase family. As to quaternary structure, monomer. Mg(2+) is required as a cofactor.

The catalysed reaction is adenosine(37) in tRNA + dimethylallyl diphosphate = N(6)-dimethylallyladenosine(37) in tRNA + diphosphate. Functionally, catalyzes the transfer of a dimethylallyl group onto the adenine at position 37 in tRNAs that read codons beginning with uridine, leading to the formation of N6-(dimethylallyl)adenosine (i(6)A). The polypeptide is tRNA dimethylallyltransferase (Shewanella sp. (strain MR-4)).